A 1238-amino-acid polypeptide reads, in one-letter code: Virulence sensor protein BvgS (1238 aa).

The signal sequence occupies residues 1–32 (MPAPHRLYPRSLICLAQALLAWALLAWAPAQA). Residues 33–307 (SQELTLVGKA…REQQWMADHP (275 aa)) are Cytoplasmic-facing. Residues 308 to 331 (VVKVAVLNLFAPFTLFRTDEQFGG) form a helical membrane-spanning segment. At 332–541 (ISAAVLQLLQ…PRTWYAYRNE (210 aa)) the chain is on the periplasmic side. A helical membrane pass occupies residues 542–563 (IYLLIGLGLLSALLFLSWIVYL). The Cytoplasmic segment spans residues 564–1238 (RRQIRQRKRA…LEQRPHQDQP (675 aa)). The 72-residue stretch at 580–651 (QLEFMRVLID…MHEFLLTRVA (72 aa)) folds into the PAS domain. A PAC domain is found at 652–708 (AEREPRFEDRDVTLHGRTRHVYQWTIPYGDSLGELKGIIGGWIDITERAELLRKLHD). The Histidine kinase domain maps to 726 to 948 (TMSHEIRTPM…TVSVDLRLTM (223 aa)). His-729 is subject to Phosphohistidine; by autocatalysis. The Response regulatory domain maps to 974–1095 (RVLVVDDHKP…ALRQRLNEAV (122 aa)). Asp-1023 is modified (4-aspartylphosphate). An HPt domain is found at 1133–1228 (DEALIRQLLE…AALETQLRAW (96 aa)). Position 1172 is a phosphohistidine (His-1172).

Activation requires a sequential transfer of a phosphate group from a His in the primary transmitter domain, to an Asp in the receiver domain and to a His in the secondary transmitter domain.

The protein localises to the cell inner membrane. The catalysed reaction is ATP + protein L-histidine = ADP + protein N-phospho-L-histidine.. Its function is as follows. Member of the two-component regulatory system BvgS/BvgA. Phosphorylates BvgA via a four-step phosphorelay in response to environmental signals. The protein is Virulence sensor protein BvgS (bvgS) of Bordetella pertussis (strain Tohama I / ATCC BAA-589 / NCTC 13251).